Here is a 248-residue protein sequence, read N- to C-terminus: NAD(P)H-quinone oxidoreductase subunit K (248 aa).

[4Fe-4S] cluster is bound by residues Cys-66, Cys-67, Cys-131, and Cys-162.

This sequence belongs to the complex I 20 kDa subunit family. NDH-1 can be composed of about 15 different subunits; different subcomplexes with different compositions have been identified which probably have different functions. The cofactor is [4Fe-4S] cluster.

Its subcellular location is the cellular thylakoid membrane. The enzyme catalyses a plastoquinone + NADH + (n+1) H(+)(in) = a plastoquinol + NAD(+) + n H(+)(out). The catalysed reaction is a plastoquinone + NADPH + (n+1) H(+)(in) = a plastoquinol + NADP(+) + n H(+)(out). NDH-1 shuttles electrons from an unknown electron donor, via FMN and iron-sulfur (Fe-S) centers, to quinones in the respiratory and/or the photosynthetic chain. The immediate electron acceptor for the enzyme in this species is believed to be plastoquinone. Couples the redox reaction to proton translocation, and thus conserves the redox energy in a proton gradient. Cyanobacterial NDH-1 also plays a role in inorganic carbon-concentration. This chain is NAD(P)H-quinone oxidoreductase subunit K, found in Synechococcus sp. (strain WH7803).